We begin with the raw amino-acid sequence, 285 residues long: Acetyl-coenzyme A carboxylase carboxyl transferase subunit beta (285 aa).

The region spanning 29-285 (IMTKCPKCKK…ILKIHQEVTK (257 aa)) is the CoA carboxyltransferase N-terminal domain. The Zn(2+) site is built by Cys-33, Cys-36, Cys-52, and Cys-55. The C4-type zinc finger occupies 33–55 (CPKCKKIMYTKELAENLNVCFNC).

This sequence belongs to the AccD/PCCB family. As to quaternary structure, acetyl-CoA carboxylase is a heterohexamer composed of biotin carboxyl carrier protein (AccB), biotin carboxylase (AccC) and two subunits each of ACCase subunit alpha (AccA) and ACCase subunit beta (AccD). Zn(2+) is required as a cofactor.

The protein resides in the cytoplasm. It catalyses the reaction N(6)-carboxybiotinyl-L-lysyl-[protein] + acetyl-CoA = N(6)-biotinyl-L-lysyl-[protein] + malonyl-CoA. It participates in lipid metabolism; malonyl-CoA biosynthesis; malonyl-CoA from acetyl-CoA: step 1/1. Component of the acetyl coenzyme A carboxylase (ACC) complex. Biotin carboxylase (BC) catalyzes the carboxylation of biotin on its carrier protein (BCCP) and then the CO(2) group is transferred by the transcarboxylase to acetyl-CoA to form malonyl-CoA. The polypeptide is Acetyl-coenzyme A carboxylase carboxyl transferase subunit beta (Staphylococcus aureus (strain Mu3 / ATCC 700698)).